A 152-amino-acid polypeptide reads, in one-letter code: NADH-ubiquinone oxidoreductase chain 4 (152 aa).

The next 4 helical transmembrane spans lie at Phe-2–Leu-22, Ile-43–Pro-63, Ile-84–Phe-104, and Met-128–Leu-148.

Belongs to the complex I subunit 4 family.

Its subcellular location is the mitochondrion membrane. It carries out the reaction a ubiquinone + NADH + 5 H(+)(in) = a ubiquinol + NAD(+) + 4 H(+)(out). Its function is as follows. Core subunit of the mitochondrial membrane respiratory chain NADH dehydrogenase (Complex I) that is believed to belong to the minimal assembly required for catalysis. Complex I functions in the transfer of electrons from NADH to the respiratory chain. The immediate electron acceptor for the enzyme is believed to be ubiquinone. This is NADH-ubiquinone oxidoreductase chain 4 (MT-ND4) from Macaca fascicularis (Crab-eating macaque).